A 170-amino-acid chain; its full sequence is MNTKTTNFTFAFDKKNLNLAETIIKKYPPNGKRSAILPLLDLAQRQNGGWLHISAIEYVANMLEMPYMRAYEVATFYSMFNLSPVGKYHIQVCTTTPCWLRGSDDIMKICEKKLAIKHKETTKDQKFTLSEIECLGACVNAPVVQINDDYYEDLNEAKMEKLIEQYLNDL.

[2Fe-2S] cluster contacts are provided by C93, C98, C134, and C138.

Belongs to the complex I 24 kDa subunit family. Requires [2Fe-2S] cluster as cofactor.

The enzyme catalyses a quinone + NADH + 5 H(+)(in) = a quinol + NAD(+) + 4 H(+)(out). NDH-1 shuttles electrons from NADH, via FMN and iron-sulfur (Fe-S) centers, to quinones in the respiratory chain. Couples the redox reaction to proton translocation (for every two electrons transferred, four hydrogen ions are translocated across the cytoplasmic membrane), and thus conserves the redox energy in a proton gradient. This chain is NADH-quinone oxidoreductase subunit E (nuoE), found in Rickettsia typhi (strain ATCC VR-144 / Wilmington).